The following is a 262-amino-acid chain: ELL-associated factor 2 (262 aa).

The necessary for interaction with ELL stretch occupies residues 17–104; sequence LKLGESFEKQ…TGECRLEKLS (88 aa). Positions 124-144 are enriched in polar residues; that stretch reads LEQQQQQMWNPPRTSNLVQHS. Disordered stretches follow at residues 124 to 154 and 170 to 232; these read LEQQ…SPTS and MDQM…ADTT. Phosphoserine is present on residues Ser-146, Ser-151, and Ser-154. Low complexity predominate over residues 174–192; that stretch reads SSCDSSSDSRSSSSSSSED. The necessary for transactivation activity stretch occupies residues 177-262; it reads DSSSDSRSSS…LSESDSDSED (86 aa). A necessary for interaction with TCEA1 and transactivation activity region spans residues 248 to 262; the sequence is RSDLQLSESDSDSED.

Belongs to the EAF family. As to quaternary structure, component of the super elongation complex (SEC), at least composed of EAF1, EAF2, CDK9, MLLT3/AF9, AFF (AFF1 or AFF4), the P-TEFb complex and ELL (ELL, ELL2 or ELL3). Interacts with ELL, ELL2 and TCEA1.

The protein resides in the nucleus speckle. In terms of biological role, acts as a transcriptional transactivator of ELL, ELL2 and TCEA1 elongation activities. Potent inducer of apoptosis in prostatic and non-prostatic cell lines. The chain is ELL-associated factor 2 (Eaf2) from Rattus norvegicus (Rat).